The primary structure comprises 238 residues: Ribonuclease PH (238 aa).

Phosphate contacts are provided by residues R86 and 124 to 126 (GTR).

It belongs to the RNase PH family. Homohexameric ring arranged as a trimer of dimers.

It catalyses the reaction tRNA(n+1) + phosphate = tRNA(n) + a ribonucleoside 5'-diphosphate. In terms of biological role, phosphorolytic 3'-5' exoribonuclease that plays an important role in tRNA 3'-end maturation. Removes nucleotide residues following the 3'-CCA terminus of tRNAs; can also add nucleotides to the ends of RNA molecules by using nucleoside diphosphates as substrates, but this may not be physiologically important. Probably plays a role in initiation of 16S rRNA degradation (leading to ribosome degradation) during starvation. This chain is Ribonuclease PH, found in Salmonella agona (strain SL483).